A 437-amino-acid polypeptide reads, in one-letter code: Glutamyl-tRNA reductase (437 aa).

Substrate contacts are provided by residues 46–49 (TCNR), Ser97, 102–104 (EEQ), and Gln108. Cys47 functions as the Nucleophile in the catalytic mechanism. 177–182 (GAGEMG) serves as a coordination point for NADP(+). The segment at 410-437 (NGRVSEGKDAKVEEGKPEVDVQRSKAES) is disordered. Over residues 414-437 (SEGKDAKVEEGKPEVDVQRSKAES) the composition is skewed to basic and acidic residues.

This sequence belongs to the glutamyl-tRNA reductase family. As to quaternary structure, homodimer.

It carries out the reaction (S)-4-amino-5-oxopentanoate + tRNA(Glu) + NADP(+) = L-glutamyl-tRNA(Glu) + NADPH + H(+). It participates in porphyrin-containing compound metabolism; protoporphyrin-IX biosynthesis; 5-aminolevulinate from L-glutamyl-tRNA(Glu): step 1/2. In terms of biological role, catalyzes the NADPH-dependent reduction of glutamyl-tRNA(Glu) to glutamate 1-semialdehyde (GSA). This Archaeoglobus fulgidus (strain ATCC 49558 / DSM 4304 / JCM 9628 / NBRC 100126 / VC-16) protein is Glutamyl-tRNA reductase.